A 320-amino-acid polypeptide reads, in one-letter code: Biotin synthase 2 (320 aa).

One can recognise a Radical SAM core domain in the interval 34-261 (NVVQCSKLLS…ASYVRLSAGR (228 aa)). Residues Cys-49, Cys-53, and Cys-56 each coordinate [4Fe-4S] cluster. Positions 93, 124, 184, and 256 each coordinate [2Fe-2S] cluster.

It belongs to the radical SAM superfamily. Biotin synthase family. Homodimer. It depends on [4Fe-4S] cluster as a cofactor. [2Fe-2S] cluster serves as cofactor.

It carries out the reaction (4R,5S)-dethiobiotin + (sulfur carrier)-SH + 2 reduced [2Fe-2S]-[ferredoxin] + 2 S-adenosyl-L-methionine = (sulfur carrier)-H + biotin + 2 5'-deoxyadenosine + 2 L-methionine + 2 oxidized [2Fe-2S]-[ferredoxin]. Its pathway is cofactor biosynthesis; biotin biosynthesis; biotin from 7,8-diaminononanoate: step 2/2. Its function is as follows. Catalyzes the conversion of dethiobiotin (DTB) to biotin by the insertion of a sulfur atom into dethiobiotin via a radical-based mechanism. This Paracoccus denitrificans (strain Pd 1222) protein is Biotin synthase 2.